Reading from the N-terminus, the 442-residue chain is Glutamate--methylamine ligase (442 aa).

The GS beta-grasp domain occupies 13 to 97 (NQVKYILAQF…IACDGHTHGK (85 aa)). The 340-residue stretch at 103-442 (TRVVLKKQLE…WEVNSYLEFF (340 aa)) folds into the GS catalytic domain.

It belongs to the glutamine synthetase family. Type 3 subfamily. It depends on Mg(2+) as a cofactor.

It catalyses the reaction methylamine + L-glutamate + ATP = N(5)-methyl-L-glutamine + ADP + phosphate + H(+). Functionally, catalyzes the formation of N(5)-methyl-L-glutamine from glutamate and methylamine. This Methyloversatilis universalis (strain ATCC BAA-1314 / DSM 25237 / JCM 13912 / CCUG 52030 / FAM5) protein is Glutamate--methylamine ligase.